A 507-amino-acid polypeptide reads, in one-letter code: Photosystem II CP47 reaction center protein (507 aa).

The Cytoplasmic portion of the chain corresponds to 2–16 (GLPWYRVHTVVLNDP). Residues 17 to 39 (GRLISVHLMHTALVAGWAGSMAL) traverse the membrane as a helical segment. Over 40–94 (YELAIFDSSDAVLNPMWRQGMFVLPFMARLGVTSSWNGWSVTGETGLDPGFWSFE) the chain is Lumenal, thylakoid. A helical transmembrane segment spans residues 95 to 116 (GVAAAHIVLSGLLFLAAVWHWV). Residues 117–134 (FWDLELFVDPRTGESALD) lie on the Cytoplasmic side of the membrane. The chain crosses the membrane as a helical span at residues 135-159 (LPKMFGIHLFLSGLLCFGFGAFHLT). The Lumenal, thylakoid portion of the chain corresponds to 160-196 (GVWGPGMWVSDPYGLTGHVQPVAPEWGPAGFNPFNPG). Residues 197–218 (GVVAHHIAAGIVGIIAGLFHLT) form a helical membrane-spanning segment. Over 219–233 (VRPPERLYKALRMGN) the chain is Cytoplasmic. A helical membrane pass occupies residues 234–255 (IETVLSSSIAAVFFAAFVVAGT). Residues 256-450 (MWYGNATTPI…GVFRTSPRGW (195 aa)) lie on the Lumenal, thylakoid side of the membrane. The chain crosses the membrane as a helical span at residues 451–474 (FTFGHAVFALLFFFGHIWHGSRTL). Over 475–507 (FRDVFAGVDPGLEEQVEFGVFAKVGDLSTRKEA) the chain is Cytoplasmic.

The protein belongs to the PsbB/PsbC family. PsbB subfamily. PSII is composed of 1 copy each of membrane proteins PsbA, PsbB, PsbC, PsbD, PsbE, PsbF, PsbH, PsbI, PsbJ, PsbK, PsbL, PsbM, PsbT, PsbX, Psb30/Ycf12, peripheral proteins PsbO, CyanoQ (PsbQ), PsbU, PsbV and a large number of cofactors. It forms dimeric complexes. Contacts PsbQ. Binds multiple chlorophylls. PSII binds additional chlorophylls, carotenoids and specific lipids. serves as cofactor.

It is found in the cellular thylakoid membrane. Functionally, one of the components of the core complex of photosystem II (PSII). It binds chlorophyll and helps catalyze the primary light-induced photochemical processes of PSII. PSII is a light-driven water:plastoquinone oxidoreductase, using light energy to abstract electrons from H(2)O, generating O(2) and a proton gradient subsequently used for ATP formation. The chain is Photosystem II CP47 reaction center protein from Synechocystis sp. (strain ATCC 27184 / PCC 6803 / Kazusa).